The following is a 409-amino-acid chain: Putative competence-damage inducible protein (409 aa).

This sequence belongs to the CinA family.

This chain is Putative competence-damage inducible protein, found in Clostridium botulinum (strain Okra / Type B1).